A 175-amino-acid polypeptide reads, in one-letter code: Sec-independent protein translocase protein TatB (175 aa).

The helical transmembrane segment at 1–21 (MLDLGLSKMALIGVVALVVLG) threads the bilayer. Low complexity predominate over residues 94-115 (SAVSPGGSAAADAPDGPSAASG). Disordered regions lie at residues 94 to 118 (SAVS…GEPS) and 153 to 175 (VQSG…ARFL). Basic residues predominate over residues 160–175 (VARHRPASLRRPARFL).

This sequence belongs to the TatB family. In terms of assembly, the Tat system comprises two distinct complexes: a TatABC complex, containing multiple copies of TatA, TatB and TatC subunits, and a separate TatA complex, containing only TatA subunits. Substrates initially bind to the TatABC complex, which probably triggers association of the separate TatA complex to form the active translocon.

Its subcellular location is the cell inner membrane. In terms of biological role, part of the twin-arginine translocation (Tat) system that transports large folded proteins containing a characteristic twin-arginine motif in their signal peptide across membranes. Together with TatC, TatB is part of a receptor directly interacting with Tat signal peptides. TatB may form an oligomeric binding site that transiently accommodates folded Tat precursor proteins before their translocation. The sequence is that of Sec-independent protein translocase protein TatB from Burkholderia pseudomallei (strain 1106a).